The chain runs to 222 residues: N-(5'-phosphoribosyl)anthranilate isomerase (222 aa).

It belongs to the TrpF family.

It carries out the reaction N-(5-phospho-beta-D-ribosyl)anthranilate = 1-(2-carboxyphenylamino)-1-deoxy-D-ribulose 5-phosphate. The protein operates within amino-acid biosynthesis; L-tryptophan biosynthesis; L-tryptophan from chorismate: step 3/5. In Prosthecochloris aestuarii (strain DSM 271 / SK 413), this protein is N-(5'-phosphoribosyl)anthranilate isomerase.